A 311-amino-acid chain; its full sequence is Solute carrier family 25 member 48 (311 aa).

Solcar repeat units follow at residues 3-86, 100-205, and 214-301; these read NFQL…TQRF, PHVL…LSDW, and PSPC…SLQA. The next 6 helical transmembrane spans lie at 9–29, 61–81, 107–127, 193–213, 217–237, and 277–295; these read FVAGWIGGAASVIVGHPLDTV, GMSFPLASIAVYNSVVFGVFS, LLASMVAGVVSVGLGAPVDLI, CLYFIPYVFLSDWITPEACAG, CAVWLAGGMAGAISWGTATPM, and ITVNAVRGFPMSAAMFLGY.

It belongs to the mitochondrial carrier (TC 2.A.29) family.

It localises to the mitochondrion inner membrane. The polypeptide is Solute carrier family 25 member 48 (SLC25A48) (Bos taurus (Bovine)).